A 229-amino-acid polypeptide reads, in one-letter code: Type III pantothenate kinase (229 aa).

Residue 7–14 (DVGNSSVD) coordinates ATP. Residues tyrosine 78 and 85–88 (GTDR) each bind substrate. The active-site Proton acceptor is aspartate 87. Threonine 110 contacts ATP. Residue threonine 161 coordinates substrate.

This sequence belongs to the type III pantothenate kinase family. In terms of assembly, homodimer. NH4(+) serves as cofactor. The cofactor is K(+).

It localises to the cytoplasm. It catalyses the reaction (R)-pantothenate + ATP = (R)-4'-phosphopantothenate + ADP + H(+). It functions in the pathway cofactor biosynthesis; coenzyme A biosynthesis; CoA from (R)-pantothenate: step 1/5. In terms of biological role, catalyzes the phosphorylation of pantothenate (Pan), the first step in CoA biosynthesis. The sequence is that of Type III pantothenate kinase from Aquifex aeolicus (strain VF5).